The sequence spans 414 residues: Na(+)-translocating NADH-quinone reductase subunit B (414 aa).

A run of 3 helical transmembrane segments spans residues 56–76, 129–149, and 164–184; these read IMIMVWFAVFPAMFWGMYNAG, FLPIYATVFLVGGFWEVLFCM, and ILFALIVPPTLPLWQAALGIT. FMN phosphoryl threonine is present on threonine 236. 5 consecutive transmembrane segments (helical) span residues 268–288, 297–317, 325–345, 358–378, and 381–401; these read IPGSIGEVSTLALMIGAAMIV, IIAGVMIGMIAVSTLFNVIGS, MPWHWHLVLGGFAFGMFFMAT, WWYGILIGAMCVMIRVVNPAY, and GMMLAILFANLFAPLFDHVVI.

This sequence belongs to the NqrB/RnfD family. In terms of assembly, composed of six subunits; NqrA, NqrB, NqrC, NqrD, NqrE and NqrF. FMN is required as a cofactor.

The protein localises to the cell inner membrane. The catalysed reaction is a ubiquinone + n Na(+)(in) + NADH + H(+) = a ubiquinol + n Na(+)(out) + NAD(+). This reaction is tightly coupled to the Na(+) pumping activity and specifically requires Na(+) for activity. Inhibited by korormicin and 2-N-heptyl-4-hydroxyquinoline N-oxide (HQNO). Functionally, NQR complex catalyzes the reduction of ubiquinone-1 to ubiquinol by two successive reactions, coupled with the transport of Na(+) ions from the cytoplasm to the periplasm. NqrA to NqrE are probably involved in the second step, the conversion of ubisemiquinone to ubiquinol. The protein is Na(+)-translocating NADH-quinone reductase subunit B of Vibrio alginolyticus.